The primary structure comprises 405 residues: Succinyl-CoA--L-malate CoA-transferase beta subunit (405 aa).

Asp-175 acts as the Nucleophile in catalysis.

The protein belongs to the CoA-transferase III family. In terms of assembly, forms a large complex composed of six heterodimers (alpha, beta).

It catalyses the reaction succinyl-CoA + (S)-malate = (S)-malyl-CoA + succinate. The enzyme catalyses (3S)-citramalate + succinyl-CoA = (3S)-citramalyl-CoA + succinate. Involved in the 3-hydroxypropionate cycle used for autotrophic carbon dioxide fixation. Catalyzes the transfer of CoA moiety from succinyl-CoA to L-malate to yield L-malyl-CoA. This is Succinyl-CoA--L-malate CoA-transferase beta subunit (smtB) from Chloroflexus aurantiacus (strain ATCC 29366 / DSM 635 / J-10-fl).